Reading from the N-terminus, the 641-residue chain is Anthrax toxin receptor-like (641 aa).

A signal peptide spans 1–27 (MMSHSPSMPCSALFLLLLLLLPPTFKG). Over 28–363 (GSLRYHGPGW…ASQGIVFKRT (336 aa)) the chain is Extracellular. In terms of domain architecture, VWFA spans 76-247 (DLYLVLDKSG…SALEGVVDPL (172 aa)). Residues S84, S86, and T150 each contribute to the a divalent metal cation site. A helical membrane pass occupies residues 364 to 384 (WLMFLPVLLVTLLLLCCTWKL). The Cytoplasmic portion of the chain corresponds to 385–641 (CIKPKKLPPP…FPPISKGPKF (257 aa)). Positions 391 to 455 (LPPPPPKPEK…ARPPPAPLPA (65 aa)) are disordered. The segment covering 407–436 (PPPSSPPAPGRGPGPGPSAGPGPGPGPSPG) has biased composition (pro residues).

Belongs to the ATR family.

The protein localises to the membrane. This is Anthrax toxin receptor-like (Antxrl) from Mus musculus (Mouse).